A 1189-amino-acid chain; its full sequence is Pesticidal crystal protein Cry1Ca (1189 aa).

It belongs to the delta endotoxin family.

Functionally, promotes colloidosmotic lysis by binding to the midgut epithelial cells of many lepidopteran larvae including Spodoptera species. In Bacillus thuringiensis subsp. entomocidus, this protein is Pesticidal crystal protein Cry1Ca (cry1Ca).